The following is a 154-amino-acid chain: UPF0178 protein Sala_2376 (154 aa).

This sequence belongs to the UPF0178 family.

This chain is UPF0178 protein Sala_2376, found in Sphingopyxis alaskensis (strain DSM 13593 / LMG 18877 / RB2256) (Sphingomonas alaskensis).